Consider the following 135-residue polypeptide: MASLKDLEGKWRLMESHGFEEYMKELGVGLALRKMAAMAKPDCIITCDGNNITVKTESTVKTTVFSCNLGEKFDETTADGRKTETVCTFQDGALVQHQQWDGKESTITRKLKDGKMIVECVMNNATCTRVYEKVQ.

An N-acetylalanine modification is found at alanine 2. A Phosphoserine modification is found at serine 3. The short motif at 24–34 (KELGVGLALRK) is the Nuclear localization signal element. Cysteine 43, threonine 56, and arginine 109 together coordinate 1-eicosanoylglycerol. Cysteines 120 and 127 form a disulfide. 129 to 131 (RVY) contacts 1-eicosanoylglycerol. Position 129 to 131 (129 to 131 (RVY)) interacts with (9Z,12Z)-octadecadienoate. A hexadecanoate-binding site is contributed by tyrosine 131. Tyrosine 131 contributes to the N-eicosanoyl ethanolamine binding site. The residue at position 131 (tyrosine 131) is a Phosphotyrosine.

It belongs to the calycin superfamily. Fatty-acid binding protein (FABP) family. As to quaternary structure, monomer. As to expression, widely expressed.

The protein resides in the cytoplasm. It is found in the nucleus. It localises to the synapse. The protein localises to the postsynaptic density. Its subcellular location is the secreted. It catalyses the reaction hexadecanoate(out) = hexadecanoate(in). The catalysed reaction is (9Z,12Z)-octadecadienoate(out) = (9Z,12Z)-octadecadienoate(in). It carries out the reaction (9Z)-octadecenoate(out) = (9Z)-octadecenoate(in). In terms of biological role, intracellular carrier for long-chain fatty acids and related active lipids, such as endocannabinoids, that regulate the metabolism and actions of the ligands they bind. In addition to the cytosolic transport, selectively delivers specific fatty acids from the cytosol to the nucleus, wherein they activate nuclear receptors. Delivers retinoic acid to the nuclear receptor peroxisome proliferator-activated receptor delta; which promotes proliferation and survival. May also serve as a synaptic carrier of endocannabinoid at central synapses and thus controls retrograde endocannabinoid signaling. Modulates inflammation by regulating PTGES induction via NF-kappa-B activation, and prostaglandin E2 (PGE2) biosynthesis during inflammation. May be involved in keratinocyte differentiation. The chain is Fatty acid-binding protein 5 from Mus musculus (Mouse).